A 303-amino-acid polypeptide reads, in one-letter code: Aspartate carbamoyltransferase catalytic subunit (303 aa).

The carbamoyl phosphate site is built by arginine 49 and threonine 50. Lysine 77 is an L-aspartate binding site. Carbamoyl phosphate is bound by residues arginine 99, histidine 126, and glutamine 129. Residues arginine 159 and arginine 211 each contribute to the L-aspartate site. Positions 252 and 253 each coordinate carbamoyl phosphate.

This sequence belongs to the aspartate/ornithine carbamoyltransferase superfamily. ATCase family. As to quaternary structure, heterododecamer (2C3:3R2) of six catalytic PyrB chains organized as two trimers (C3), and six regulatory PyrI chains organized as three dimers (R2).

It catalyses the reaction carbamoyl phosphate + L-aspartate = N-carbamoyl-L-aspartate + phosphate + H(+). Its pathway is pyrimidine metabolism; UMP biosynthesis via de novo pathway; (S)-dihydroorotate from bicarbonate: step 2/3. Functionally, catalyzes the condensation of carbamoyl phosphate and aspartate to form carbamoyl aspartate and inorganic phosphate, the committed step in the de novo pyrimidine nucleotide biosynthesis pathway. This is Aspartate carbamoyltransferase catalytic subunit from Listeria monocytogenes serovar 1/2a (strain ATCC BAA-679 / EGD-e).